The chain runs to 183 residues: Large ribosomal subunit protein uL5 (183 aa).

It belongs to the universal ribosomal protein uL5 family. Part of the 50S ribosomal subunit; part of the 5S rRNA/L5/L18/L25 subcomplex. Contacts the 5S rRNA and the P site tRNA. Forms a bridge to the 30S subunit in the 70S ribosome.

Its function is as follows. This is one of the proteins that bind and probably mediate the attachment of the 5S RNA into the large ribosomal subunit, where it forms part of the central protuberance. In the 70S ribosome it contacts protein S13 of the 30S subunit (bridge B1b), connecting the 2 subunits; this bridge is implicated in subunit movement. Contacts the P site tRNA; the 5S rRNA and some of its associated proteins might help stabilize positioning of ribosome-bound tRNAs. The sequence is that of Large ribosomal subunit protein uL5 from Flavobacterium johnsoniae (strain ATCC 17061 / DSM 2064 / JCM 8514 / BCRC 14874 / CCUG 350202 / NBRC 14942 / NCIMB 11054 / UW101) (Cytophaga johnsonae).